The following is a 155-amino-acid chain: Cytochrome c-type biogenesis protein CcmE (155 aa).

Over 1–7 (MTRKQKR) the chain is Cytoplasmic. Residues 8-28 (LVVIAGGMSFILAAVLLVMFA) traverse the membrane as a helical; Signal-anchor for type II membrane protein segment. Residues 29–155 (FSQSVAYFYM…GKGQEAKATP (127 aa)) are Periplasmic-facing. Heme is bound by residues His124 and Tyr128.

The protein belongs to the CcmE/CycJ family.

It is found in the cell inner membrane. Its function is as follows. Heme chaperone required for the biogenesis of c-type cytochromes. Transiently binds heme delivered by CcmC and transfers the heme to apo-cytochromes in a process facilitated by CcmF and CcmH. This Rhizobium etli (strain ATCC 51251 / DSM 11541 / JCM 21823 / NBRC 15573 / CFN 42) protein is Cytochrome c-type biogenesis protein CcmE.